The following is a 446-amino-acid chain: Histidine--tRNA ligase (446 aa).

It belongs to the class-II aminoacyl-tRNA synthetase family. Homodimer.

It is found in the cytoplasm. It catalyses the reaction tRNA(His) + L-histidine + ATP = L-histidyl-tRNA(His) + AMP + diphosphate + H(+). The sequence is that of Histidine--tRNA ligase from Burkholderia cenocepacia (strain ATCC BAA-245 / DSM 16553 / LMG 16656 / NCTC 13227 / J2315 / CF5610) (Burkholderia cepacia (strain J2315)).